The chain runs to 144 residues: Large ribosomal subunit protein uL14 (144 aa).

The protein belongs to the universal ribosomal protein uL14 family. As to quaternary structure, part of the 50S ribosomal subunit. Forms a cluster with proteins L3 and L24e, part of which may contact the 16S rRNA in 2 intersubunit bridges.

In terms of biological role, binds to 23S rRNA. Forms part of two intersubunit bridges in the 70S ribosome. The polypeptide is Large ribosomal subunit protein uL14 (Caldivirga maquilingensis (strain ATCC 700844 / DSM 13496 / JCM 10307 / IC-167)).